A 674-amino-acid chain; its full sequence is DNA ligase (674 aa).

NAD(+)-binding positions include Asp-35–Asp-39, Ser-82–Leu-83, and Glu-116. Lys-118 functions as the N6-AMP-lysine intermediate in the catalytic mechanism. Residues Arg-139, Glu-174, Lys-282, and Lys-306 each contribute to the NAD(+) site. Cys-400, Cys-403, Cys-418, and Cys-424 together coordinate Zn(2+). The BRCT domain maps to Ser-593–Val-674.

The protein belongs to the NAD-dependent DNA ligase family. LigA subfamily. Requires Mg(2+) as cofactor. Mn(2+) is required as a cofactor.

It carries out the reaction NAD(+) + (deoxyribonucleotide)n-3'-hydroxyl + 5'-phospho-(deoxyribonucleotide)m = (deoxyribonucleotide)n+m + AMP + beta-nicotinamide D-nucleotide.. Functionally, DNA ligase that catalyzes the formation of phosphodiester linkages between 5'-phosphoryl and 3'-hydroxyl groups in double-stranded DNA using NAD as a coenzyme and as the energy source for the reaction. It is essential for DNA replication and repair of damaged DNA. The sequence is that of DNA ligase from Ehrlichia ruminantium (strain Welgevonden).